The sequence spans 332 residues: Ribose operon repressor (332 aa).

In terms of domain architecture, HTH lacI-type spans 2–56 (ATMKDIARLAQVSTSTVSHVINGSRFVSDEIREKVMRIVAELNYTPSAVARSLKV). The H-T-H motif DNA-binding region spans 4-23 (MKDIARLAQVSTSTVSHVIN).

In terms of biological role, transcriptional repressor for the ribose rbsDACBK operon. This chain is Ribose operon repressor (rbsR), found in Haemophilus influenzae (strain ATCC 51907 / DSM 11121 / KW20 / Rd).